The chain runs to 205 residues: Proteasome subunit beta type-3 (205 aa).

At Ser2 the chain carries N-acetylserine. The residue at position 77 (Lys77) is an N6-acetyllysine.

The protein belongs to the peptidase T1B family. In terms of assembly, the 26S proteasome consists of a 20S proteasome core and two 19S regulatory subunits. The 20S proteasome core is a barrel-shaped complex made of 28 subunits that are arranged in four stacked rings. The two outer rings are each formed by seven alpha subunits, and the two inner rings are formed by seven beta subunits. The proteolytic activity is exerted by three beta-subunits PSMB5, PSMB6 and PSMB7. Detected in liver (at protein level).

The protein localises to the cytoplasm. The protein resides in the nucleus. Its function is as follows. Non-catalytic component of the 20S core proteasome complex involved in the proteolytic degradation of most intracellular proteins. This complex plays numerous essential roles within the cell by associating with different regulatory particles. Associated with two 19S regulatory particles, forms the 26S proteasome and thus participates in the ATP-dependent degradation of ubiquitinated proteins. The 26S proteasome plays a key role in the maintenance of protein homeostasis by removing misfolded or damaged proteins that could impair cellular functions, and by removing proteins whose functions are no longer required. Associated with the PA200 or PA28, the 20S proteasome mediates ubiquitin-independent protein degradation. This type of proteolysis is required in several pathways including spermatogenesis (20S-PA200 complex) or generation of a subset of MHC class I-presented antigenic peptides (20S-PA28 complex). This chain is Proteasome subunit beta type-3 (Psmb3), found in Mus musculus (Mouse).